Here is a 213-residue protein sequence, read N- to C-terminus: Probable nicotinate-nucleotide adenylyltransferase (213 aa).

Belongs to the NadD family.

It carries out the reaction nicotinate beta-D-ribonucleotide + ATP + H(+) = deamido-NAD(+) + diphosphate. Its pathway is cofactor biosynthesis; NAD(+) biosynthesis; deamido-NAD(+) from nicotinate D-ribonucleotide: step 1/1. Functionally, catalyzes the reversible adenylation of nicotinate mononucleotide (NaMN) to nicotinic acid adenine dinucleotide (NaAD). This Escherichia coli O45:K1 (strain S88 / ExPEC) protein is Probable nicotinate-nucleotide adenylyltransferase.